The primary structure comprises 106 residues: Urease subunit beta (106 aa).

The protein belongs to the urease beta subunit family. In terms of assembly, heterotrimer of UreA (gamma), UreB (beta) and UreC (alpha) subunits. Three heterotrimers associate to form the active enzyme.

It localises to the cytoplasm. It carries out the reaction urea + 2 H2O + H(+) = hydrogencarbonate + 2 NH4(+). Its pathway is nitrogen metabolism; urea degradation; CO(2) and NH(3) from urea (urease route): step 1/1. The chain is Urease subunit beta from Prochlorococcus marinus subsp. pastoris (strain CCMP1986 / NIES-2087 / MED4).